A 434-amino-acid polypeptide reads, in one-letter code: GTPase Obg (434 aa).

One can recognise an Obg domain in the interval 4 to 162; it reads ADFIDRIVIY…RKLVLELKLL (159 aa). Residues 163–333 enclose the OBG-type G domain; sequence ADVGLVGYPN…IVYKLAEIVK (171 aa). Residues 169–176, 194–198, 215–218, 285–288, and 314–316 each bind GTP; these read GYPNVGKS, FTTTI, DIPG, NKID, and SII. Mg(2+)-binding residues include S176 and T196. One can recognise an OCT domain in the interval 355 to 434; it reads LWKELPERFN…VAQRAFEYKE (80 aa).

It belongs to the TRAFAC class OBG-HflX-like GTPase superfamily. OBG GTPase family. In terms of assembly, monomer. Mg(2+) serves as cofactor.

It is found in the cytoplasm. Functionally, an essential GTPase which binds GTP, GDP and possibly (p)ppGpp with moderate affinity, with high nucleotide exchange rates and a fairly low GTP hydrolysis rate. Plays a role in control of the cell cycle, stress response, ribosome biogenesis and in those bacteria that undergo differentiation, in morphogenesis control. In Thermosipho africanus (strain TCF52B), this protein is GTPase Obg.